The chain runs to 449 residues: Plasmepsin IV (449 aa).

Residues 1 to 37 (MALTVKEEEFSNTLIKNASAFDRLKLGNLKNLKIQKK) lie on the Cytoplasmic side of the membrane. Positions 1-121 (MALTVKEEEF…SGYAQKGYLG (121 aa)) are excised as a propeptide. A helical; Signal-anchor for type II membrane protein transmembrane segment spans residues 38–58 (LQFLYLILFVLITGVFFFFLI). At 59-449 (GNFYSHRKLY…SVGFAVAKNL (391 aa)) the chain is on the lumenal side. The 308-residue stretch at 137–444 (FYGEGQIGTN…DYEKESVGFA (308 aa)) folds into the Peptidase A1 domain. The active site involves aspartate 155. Residues cysteine 168 and cysteine 173 are joined by a disulfide bond. Residue aspartate 335 is part of the active site. A disulfide bridge links cysteine 370 with cysteine 406.

This sequence belongs to the peptidase A1 family. As to quaternary structure, component of the hemozoin formation complex (HFC) composed of falcipains FP2A and/or FP2B, plasmepsins PMII, PMIII/HAP and PMIV, heme detoxifying protein HDP and falcilysin FLN. The HFC complex is involved in hemoglobin degradation and detoxification of heme in the food vacuole during the asexual blood stage. In terms of processing, proteolytically cleaved into the soluble active mature form by cysteine proteases in the digestive vacuole of trophozoites. Proteolysis requires an acidic environment. Autoprocessing or transprocessing by other plasmepsins such as PMII may serve as an alternate activation system.

Its subcellular location is the membrane. The protein localises to the vacuole lumen. It catalyses the reaction Hydrolysis of the bonds linking certain hydrophobic residues in hemoglobin or globin. Also cleaves small molecules substrates such as Ala-Leu-Glu-Arg-Thr-Phe-|-Phe(NO2)-Ser-Phe-Pro-Thr.. Its activity is regulated as follows. Inhibited by pepstatin A. During the asexual blood stage, catalyzes the cleavage of denatured host hemoglobin (Hb) or globins. Digestion of host Hb is an essential step which provides the parasite with amino acids for protein synthesis, and regulates osmolarity. The protein is Plasmepsin IV of Plasmodium falciparum (isolate HB3).